The sequence spans 495 residues: Trimethylamine methyltransferase MttB (495 aa).

Residue pyrrolysine 334 is a non-standard amino acid, pyrrolysine.

Belongs to the trimethylamine methyltransferase family. In terms of assembly, can form a complex with MttC.

It carries out the reaction Co(I)-[trimethylamine-specific corrinoid protein] + trimethylamine + H(+) = methyl-Co(III)-[trimethylamine-specific corrinoid protein] + dimethylamine. It participates in one-carbon metabolism; methanogenesis from trimethylamine. Functionally, catalyzes the transfer of a methyl group from trimethylamine to the corrinoid cofactor of MttC. The chain is Trimethylamine methyltransferase MttB from Methanosarcina barkeri.